A 405-amino-acid polypeptide reads, in one-letter code: Imidazolonepropionase (405 aa).

The Fe(3+) site is built by histidine 72 and histidine 74. 2 residues coordinate Zn(2+): histidine 72 and histidine 74. Residues arginine 81, tyrosine 144, and histidine 177 each contribute to the 4-imidazolone-5-propanoate site. An N-formimidoyl-L-glutamate-binding site is contributed by tyrosine 144. Histidine 242 lines the Fe(3+) pocket. Histidine 242 is a binding site for Zn(2+). Residue glutamine 245 participates in 4-imidazolone-5-propanoate binding. Fe(3+) is bound at residue aspartate 317. A Zn(2+)-binding site is contributed by aspartate 317. N-formimidoyl-L-glutamate contacts are provided by asparagine 319 and glycine 321. A 4-imidazolone-5-propanoate-binding site is contributed by threonine 322.

This sequence belongs to the metallo-dependent hydrolases superfamily. HutI family. The cofactor is Zn(2+). Requires Fe(3+) as cofactor.

The protein localises to the cytoplasm. It carries out the reaction 4-imidazolone-5-propanoate + H2O = N-formimidoyl-L-glutamate. It functions in the pathway amino-acid degradation; L-histidine degradation into L-glutamate; N-formimidoyl-L-glutamate from L-histidine: step 3/3. Its function is as follows. Catalyzes the hydrolytic cleavage of the carbon-nitrogen bond in imidazolone-5-propanoate to yield N-formimidoyl-L-glutamate. It is the third step in the universal histidine degradation pathway. The protein is Imidazolonepropionase of Klebsiella pneumoniae (strain 342).